Here is a 185-residue protein sequence, read N- to C-terminus: 16S rRNA aminocarboxypropyltransferase (185 aa).

5 residues coordinate S-adenosyl-L-methionine: Thr-19, Ile-69, Leu-93, Tyr-108, and Thr-112.

Belongs to the TDD superfamily. TSR3 family.

The protein localises to the cytoplasm. The catalysed reaction is an N(1)-methylpseudouridine in rRNA + S-adenosyl-L-methionine = N(1)-methyl-N(3)-[(3S)-3-amino-3-carboxypropyl]pseudouridine in rRNA + S-methyl-5'-thioadenosine + H(+). Functionally, aminocarboxypropyltransferase that catalyzes the aminocarboxypropyl transfer on pseudouridine corresponding to position 914 in M.jannaschii 16S rRNA. It constitutes the last step in biosynthesis of the hypermodified N1-methyl-N3-(3-amino-3-carboxypropyl) pseudouridine (m1acp3-Psi). In Vulcanisaeta distributa (strain DSM 14429 / JCM 11212 / NBRC 100878 / IC-017), this protein is 16S rRNA aminocarboxypropyltransferase.